A 787-amino-acid polypeptide reads, in one-letter code: MERVQRVLEYNKMKQQLLEHVASSLGRQKVNELVPSTSLEEVRHLQDETAEAANVLRLKGHVPLGGISDVRPHIKRAAIGGVLSATELIEIASTLYGGKRVKQFIETIIEDGHIEVPILAGHVEQIEPLSPIEKAIKQCIDDNGYVLDSASTSLRTVRHQIRSYESGIKSKLDQLTRSSNTRKMLSDAIVTIRSDRYVLPVKQEYRGTFGGIVHDQSSSGATLFIEPAAIVTLNNQLTEAKAKEKREIERILRELSAKVAEESEQLLLNVDKLAQLDFICAKAYYAKAVKAVKPTLNDRGYLDLRQARHPLLPPDKVVPSDMAIGDQVRSLVITGPNTGGKTVTLKTIGLLTLMAQSGLFVPAAEETELAVFEHIFADIGDEQSIEQSLSTFSSHMKNIVSILNEMNENSLILFDELGAGTDPTEGAALAISILDHVYKRGALAVATTHYSELKGYAYNREGALNASVEFDVETLRPTYRLLVGVPGRSNAFAISRRLGLDERIIDQAKLQIDSDASQVEKMIASLEDSQKSAQSEWSRAEAVRREAEALKRDLEKRMASFEEMKEAALQKAEQKAEKVVAAAQENAELIISELRDLQKQGVAVKEHQLIEARKQLEEAAPKLVSKKRKQVKKQAEKAKRLPEPGDEVKVLSFNQKGTVVKKIGDNEYQVQLGIMKMAVPIDDIQLLEQERRQPEKAITTIRGNDAHVKAELDLRGERYEDAMRRVEKYIDDALLAGYHQVSIIHGKGTGALRKGVKQFVANHPRVKSARDGGMNEGGLGNTVIELK.

Glycine 335–threonine 342 provides a ligand contact to ATP. The 76-residue stretch at leucine 712–lysine 787 folds into the Smr domain.

The protein belongs to the DNA mismatch repair MutS family. MutS2 subfamily. Homodimer. Binds to stalled ribosomes, contacting rRNA.

Functionally, endonuclease that is involved in the suppression of homologous recombination and thus may have a key role in the control of bacterial genetic diversity. In terms of biological role, acts as a ribosome collision sensor, splitting the ribosome into its 2 subunits. Detects stalled/collided 70S ribosomes which it binds and splits by an ATP-hydrolysis driven conformational change. Acts upstream of the ribosome quality control system (RQC), a ribosome-associated complex that mediates the extraction of incompletely synthesized nascent chains from stalled ribosomes and their subsequent degradation. Probably generates substrates for RQC. The sequence is that of Endonuclease MutS2 from Shouchella clausii (strain KSM-K16) (Alkalihalobacillus clausii).